The primary structure comprises 433 residues: MNLLIKNVNLLSMEEDKVLEGVNVYVEGDTIKHIGELLPDVKVDVVIEGKDKLAMPGLINAHTHLGMSLFRNYANDVPLFDWLTKYIWPLEARLTAEDVYWGSLLSMIEMIYSGTTTYCDMYFFMEEVAKATEEIGIRGVISRGIIEEQDAKVNEEKLKDTENLYNAWNGKAEGRIKVMVGPHAPYTCGPTYLKEILDLAKRLGTGIHIHVSETKREVEESLEKYGKTPVQHLKDLGIFEVPTVAAHCVHLTDEDIEVLKEMKVSPVYNPTSNLKLASGFAPVEKMLKKGINVALGTDGPASNNNLNMFEEIHFAATINKALNEDALSVPAFEALKMATVSGARALLWEREIGTIEVGKKADVILIDLNKPHLHPKNDLISALAYSVQGSDVDTVIVNGKVIMEKREIKTVDVERVYYEVEKRAQNLIRGEIS.

The Zn(2+) site is built by His-62 and His-64. Substrate is bound by residues Glu-91, Arg-143, and His-183. Zn(2+) is bound at residue His-210. Substrate contacts are provided by Glu-213 and Asp-298. Asp-298 lines the Zn(2+) pocket.

Belongs to the metallo-dependent hydrolases superfamily. MTA/SAH deaminase family. The cofactor is Zn(2+).

The catalysed reaction is S-adenosyl-L-homocysteine + H2O + H(+) = S-inosyl-L-homocysteine + NH4(+). It catalyses the reaction S-methyl-5'-thioadenosine + H2O + H(+) = S-methyl-5'-thioinosine + NH4(+). Catalyzes the deamination of 5-methylthioadenosine and S-adenosyl-L-homocysteine into 5-methylthioinosine and S-inosyl-L-homocysteine, respectively. Is also able to deaminate adenosine. This chain is 5-methylthioadenosine/S-adenosylhomocysteine deaminase, found in Caldanaerobacter subterraneus subsp. tengcongensis (strain DSM 15242 / JCM 11007 / NBRC 100824 / MB4) (Thermoanaerobacter tengcongensis).